Reading from the N-terminus, the 229-residue chain is Large ribosomal subunit protein uL1 (229 aa).

This sequence belongs to the universal ribosomal protein uL1 family. As to quaternary structure, part of the 50S ribosomal subunit.

Functionally, binds directly to 23S rRNA. The L1 stalk is quite mobile in the ribosome, and is involved in E site tRNA release. Protein L1 is also a translational repressor protein, it controls the translation of the L11 operon by binding to its mRNA. This is Large ribosomal subunit protein uL1 from Streptococcus uberis (strain ATCC BAA-854 / 0140J).